The following is a 597-amino-acid chain: Membrane protein insertase YidC (597 aa).

Residues 8–28 (YFVAIALSVLILIAWQFFYVS) form a helical membrane-spanning segment. The tract at residues 38 to 75 (AEKAQQAQSQPGTQQAAPGQAAPGQALPGGAIPSAAES) is disordered. Residues 41 to 70 (AQQAQSQPGTQQAAPGQAAPGQALPGGAIP) show a composition bias toward low complexity. 4 consecutive transmembrane segments (helical) span residues 372–392 (LFGN…LIFF), 446–466 (WPIL…YVTI), 491–511 (LFGL…WPIV), and 535–555 (FTWM…GLVI).

Belongs to the OXA1/ALB3/YidC family. Type 1 subfamily. In terms of assembly, interacts with the Sec translocase complex via SecD. Specifically interacts with transmembrane segments of nascent integral membrane proteins during membrane integration.

The protein resides in the cell inner membrane. Its function is as follows. Required for the insertion and/or proper folding and/or complex formation of integral membrane proteins into the membrane. Involved in integration of membrane proteins that insert both dependently and independently of the Sec translocase complex, as well as at least some lipoproteins. Aids folding of multispanning membrane proteins. The sequence is that of Membrane protein insertase YidC from Sinorhizobium medicae (strain WSM419) (Ensifer medicae).